A 307-amino-acid polypeptide reads, in one-letter code: Coproporphyrin III ferrochelatase (307 aa).

Fe-coproporphyrin III is bound by residues tyrosine 12, arginine 29, 45-46 (RY), serine 53, and tyrosine 124. Fe(2+)-binding residues include histidine 181 and glutamate 263.

It belongs to the ferrochelatase family.

The protein localises to the cytoplasm. It carries out the reaction Fe-coproporphyrin III + 2 H(+) = coproporphyrin III + Fe(2+). It participates in porphyrin-containing compound metabolism; protoheme biosynthesis. Involved in coproporphyrin-dependent heme b biosynthesis. Catalyzes the insertion of ferrous iron into coproporphyrin III to form Fe-coproporphyrin III. This Staphylococcus saprophyticus subsp. saprophyticus (strain ATCC 15305 / DSM 20229 / NCIMB 8711 / NCTC 7292 / S-41) protein is Coproporphyrin III ferrochelatase.